The primary structure comprises 2202 residues: Activating signal cointegrator 1 complex subunit 3 (2202 aa).

A required for interaction with ASCC2 region spans residues 1-400 (MALPRLTGAL…RQRDADVEKI (400 aa)). The residue at position 12 (serine 12) is a Phosphoserine. Coiled coils occupy residues 18 to 79 (KQDN…AAKQ) and 328 to 356 (IQSEQEKQLMKQYRREEKRIARREKKAGE). The Helicase ATP-binding 1 domain maps to 486 to 669 (ETAYNTNENM…FLHVNPYIGL (184 aa)). 499–506 (APTGAGKT) contributes to the ATP binding site. N6-acetyllysine is present on lysine 572. Residues 611-614 (DEVH) carry the DEVH box motif. A Helicase C-terminal 1 domain is found at 728–914 (TVRTAMSLIE…GTVTNVEEAV (187 aa)). The SEC63 1 domain occupies 978–1287 (STDLGRTASH…GAEAVCIINF (310 aa)). Residues 1336–1511 (HTLYHTDCNV…WLNIKQMGLF (176 aa)) enclose the Helicase ATP-binding 2 domain. 1349 to 1356 (APTGSGKT) is an ATP binding site. The short motif at 1453–1456 (DEIH) is the DEIH box element. Residues 1544-1739 (PAFQAIRSHS…VLSDHLNAEI (196 aa)) form the Helicase C-terminal 2 domain. The SEC63 2 domain occupies 1812-2176 (PLTYGRIASY…LGLDQQYDIY (365 aa)). Serine 2195 bears the Phosphoserine mark.

It belongs to the helicase family. In terms of assembly, identified in the ASCC complex that contains ASCC1, ASCC2 and ASCC3. Functions as scaffolding subunit that interacts directly with both ASCC1 and ASCC2. Interacts directly with ALKBH3, and thereby recruits ALKBH3 to the ASCC complex. Part of the ASC-1/TRIP4 complex, that contains TRIP4, ASCC1, ASCC2 and ASCC3. Part of the RQT (ribosome quality control trigger) complex, that contains ASCC2, ASCC3 and TRIP4. Associates with ribosomes; recruited to collided ribosomes. Interacts with ZCCHC4. Interacts with ZNF598. Interacts with RPS3. In terms of tissue distribution, ubiquitous.

Its subcellular location is the nucleus. It is found in the nucleus speckle. It localises to the cytoplasm. The protein resides in the cytosol. It catalyses the reaction Couples ATP hydrolysis with the unwinding of duplex DNA by translocating in the 3'-5' direction.. It carries out the reaction ATP + H2O = ADP + phosphate + H(+). In terms of biological role, ATPase involved both in DNA repair and rescue of stalled ribosomes. 3'-5' DNA helicase involved in repair of alkylated DNA: promotes DNA unwinding to generate single-stranded substrate needed for ALKBH3, enabling ALKBH3 to process alkylated N3-methylcytosine (3mC) within double-stranded regions. Also involved in activation of the ribosome quality control (RQC) pathway, a pathway that degrades nascent peptide chains during problematic translation. Drives the splitting of stalled ribosomes that are ubiquitinated in a ZNF598-dependent manner, as part of the ribosome quality control trigger (RQT) complex. Part of the ASC-1 complex that enhances NF-kappa-B, SRF and AP1 transactivation. This chain is Activating signal cointegrator 1 complex subunit 3 (ASCC3), found in Homo sapiens (Human).